The sequence spans 308 residues: UPF0282 protein M1425_2116 (308 aa).

It belongs to the UPF0282 family.

This chain is UPF0282 protein M1425_2116, found in Saccharolobus islandicus (strain M.14.25 / Kamchatka #1) (Sulfolobus islandicus).